A 643-amino-acid chain; its full sequence is Pseudouridylate synthase PUS7L (643 aa).

Residue aspartate 284 is the Nucleophile of the active site. Residues 370–597 (GFVNYYGPQR…PGCYRPLLAK (228 aa)) enclose the TRUD domain.

The protein belongs to the pseudouridine synthase TruD family.

It catalyses the reaction a uridine in mRNA = a pseudouridine in mRNA. In terms of biological role, pseudouridine synthase that catalyzes pseudouridylation of mRNAs. The sequence is that of Pseudouridylate synthase PUS7L (pus7l) from Danio rerio (Zebrafish).